The chain runs to 312 residues: Malate dehydrogenase (312 aa).

Residues 7–13 and D34 contribute to the NAD(+) site; that span reads GAAGGIG. 2 residues coordinate substrate: R81 and R87. NAD(+) contacts are provided by residues N94 and 117–119; that span reads ITN. N119 and R153 together coordinate substrate. Residue H177 is the Proton acceptor of the active site. M227 lines the NAD(+) pocket.

This sequence belongs to the LDH/MDH superfamily. MDH type 1 family. As to quaternary structure, homodimer.

The enzyme catalyses (S)-malate + NAD(+) = oxaloacetate + NADH + H(+). In terms of biological role, catalyzes the reversible oxidation of malate to oxaloacetate. This Salmonella gallinarum (strain 287/91 / NCTC 13346) protein is Malate dehydrogenase.